The following is a 381-amino-acid chain: Heterogeneous nuclear rnp K-like protein 2 (381 aa).

The tract at residues 1-34 (MSQFFEAATPVAIPTNNTNGGSSDAGSAATGGAP) is disordered. Over residues 15–33 (TNNTNGGSSDAGSAATGGA) the composition is skewed to low complexity. KH domains lie at 43 to 107 (TINH…IGDI), 156 to 221 (IGYV…LIEI), and 258 to 326 (NTRI…ESML). The disordered stretch occupies residues 344 to 381 (LEAAEGDATVVTERSDSASFLEEKEEPQENHDNKEEQS). Phosphoserine occurs at positions 358, 360, and 362. Residues 370-381 (PQENHDNKEEQS) show a composition bias toward basic and acidic residues.

Belongs to the HEK2 family. As to quaternary structure, binds RNA. Phosphorylated by the plasma membrane-Anchored casein kinase YCK1. Phosphorylation at its C-terminus reduces its RNA-binding capacity.

It is found in the cytoplasm. Its subcellular location is the P-body. The protein resides in the nucleus. The protein localises to the chromosome. It localises to the telomere. Functionally, RNA-binding protein involved in the correct localization of transcripts in the cell. RNA localization is a widespread mechanism for achieving localized protein synthesis. Required for the asymmetric localization to the daughter cell nucleus of the ASH1 transcript, coding for a specific repressor of transcription. Overexpression inhibits translation of the ASH1 transcript. Involved in the stability of transcripts, like the MTL1 mRNA. Involved in structural and functional organization of telomeric chromatin and regulates silencing at the HMR locus. The sequence is that of Heterogeneous nuclear rnp K-like protein 2 (HEK2) from Saccharomyces cerevisiae (strain YJM789) (Baker's yeast).